A 134-amino-acid chain; its full sequence is Small ribosomal subunit protein uS9 (134 aa).

A disordered region spans residues 114–134 (QKEAKNFGGPGARSKYQKSYR).

It belongs to the universal ribosomal protein uS9 family.

This chain is Small ribosomal subunit protein uS9, found in Methanosarcina mazei (strain ATCC BAA-159 / DSM 3647 / Goe1 / Go1 / JCM 11833 / OCM 88) (Methanosarcina frisia).